Here is a 184-residue protein sequence, read N- to C-terminus: Elongation factor P 1 (184 aa).

This sequence belongs to the elongation factor P family.

It is found in the cytoplasm. Its pathway is protein biosynthesis; polypeptide chain elongation. Involved in peptide bond synthesis. Stimulates efficient translation and peptide-bond synthesis on native or reconstituted 70S ribosomes in vitro. Probably functions indirectly by altering the affinity of the ribosome for aminoacyl-tRNA, thus increasing their reactivity as acceptors for peptidyl transferase. The polypeptide is Elongation factor P 1 (efp1) (Protochlamydia amoebophila (strain UWE25)).